The primary structure comprises 84 residues: Metallothionein type 2b (84 aa).

This sequence belongs to the metallothionein superfamily. Type 15 family. In terms of tissue distribution, expressed in leaves, stems and roots.

The protein resides in the cytoplasm. The protein localises to the nucleus. In terms of biological role, metallothioneins have a high content of cysteine residues that bind various heavy metals. Probably involved in maintaining homeostasis of essential transition metals and detoxification of toxic metals. Increases cadmium and zinc tolerance when expressed in heterologous systems. Metal chelator binding 6 cadmium or 5 zinc atoms per protein. This is Metallothionein type 2b from Colocasia esculenta (Wild taro).